We begin with the raw amino-acid sequence, 96 residues long: Aspartyl/glutamyl-tRNA(Asn/Gln) amidotransferase subunit C (96 aa).

The protein belongs to the GatC family. In terms of assembly, heterotrimer of A, B and C subunits.

It carries out the reaction L-glutamyl-tRNA(Gln) + L-glutamine + ATP + H2O = L-glutaminyl-tRNA(Gln) + L-glutamate + ADP + phosphate + H(+). It catalyses the reaction L-aspartyl-tRNA(Asn) + L-glutamine + ATP + H2O = L-asparaginyl-tRNA(Asn) + L-glutamate + ADP + phosphate + 2 H(+). In terms of biological role, allows the formation of correctly charged Asn-tRNA(Asn) or Gln-tRNA(Gln) through the transamidation of misacylated Asp-tRNA(Asn) or Glu-tRNA(Gln) in organisms which lack either or both of asparaginyl-tRNA or glutaminyl-tRNA synthetases. The reaction takes place in the presence of glutamine and ATP through an activated phospho-Asp-tRNA(Asn) or phospho-Glu-tRNA(Gln). This is Aspartyl/glutamyl-tRNA(Asn/Gln) amidotransferase subunit C from Oceanobacillus iheyensis (strain DSM 14371 / CIP 107618 / JCM 11309 / KCTC 3954 / HTE831).